An 87-amino-acid polypeptide reads, in one-letter code: NADH-ubiquinone oxidoreductase chain 4L (87 aa).

2 helical membrane passes run 22–42 and 49–69; these read FLSF…FIIG and LFLI…SLLV.

The protein belongs to the complex I subunit 4L family.

It is found in the mitochondrion membrane. It catalyses the reaction a ubiquinone + NADH + 5 H(+)(in) = a ubiquinol + NAD(+) + 4 H(+)(out). In terms of biological role, core subunit of the mitochondrial membrane respiratory chain NADH dehydrogenase (Complex I) that is believed to belong to the minimal assembly required for catalysis. Complex I functions in the transfer of electrons from NADH to the respiratory chain. The immediate electron acceptor for the enzyme is believed to be ubiquinone. The sequence is that of NADH-ubiquinone oxidoreductase chain 4L (ND4L) from Apis mellifera ligustica (Common honeybee).